A 339-amino-acid polypeptide reads, in one-letter code: Thymidine kinase (339 aa).

ATP is bound at residue 11-18; that stretch reads GAFGIGKT. The Proton acceptor role is filled by Glu39. Positions 59 and 83 each coordinate substrate. Arg176 provides a ligand contact to ATP. Arg182 lines the substrate pocket.

It belongs to the herpesviridae thymidine kinase family. Homodimer.

It carries out the reaction thymidine + ATP = dTMP + ADP + H(+). Its function is as follows. Catalyzes the transfer of the gamma-phospho group of ATP to thymidine to generate dTMP in the salvage pathway of pyrimidine synthesis. The dTMP serves as a substrate for DNA polymerase during viral DNA replication. Allows the virus to be reactivated and to grow in non-proliferative cells lacking a high concentration of phosphorylated nucleic acid precursors. The protein is Thymidine kinase of Amazona oratrix (yellow-headed parrot).